The following is a 95-amino-acid chain: Co-chaperonin GroES (95 aa).

Belongs to the GroES chaperonin family. In terms of assembly, heptamer of 7 subunits arranged in a ring. Interacts with the chaperonin GroEL.

The protein resides in the cytoplasm. In terms of biological role, together with the chaperonin GroEL, plays an essential role in assisting protein folding. The GroEL-GroES system forms a nano-cage that allows encapsulation of the non-native substrate proteins and provides a physical environment optimized to promote and accelerate protein folding. GroES binds to the apical surface of the GroEL ring, thereby capping the opening of the GroEL channel. In Bordetella avium (strain 197N), this protein is Co-chaperonin GroES.